Consider the following 683-residue polypeptide: DNA ligase (683 aa).

NAD(+) contacts are provided by residues 36-40, 85-86, and Glu121; these read DAVYD and SL. The N6-AMP-lysine intermediate role is filled by Lys123. The NAD(+) site is built by Arg144, Glu180, Lys296, and Lys320. The Zn(2+) site is built by Cys413, Cys416, Cys431, and Cys437. The 79-residue stretch at 605–683 folds into the BRCT domain; the sequence is PSEGHLSGKV…ESGWRVLAGL (79 aa).

Belongs to the NAD-dependent DNA ligase family. LigA subfamily. Mg(2+) is required as a cofactor. It depends on Mn(2+) as a cofactor.

The catalysed reaction is NAD(+) + (deoxyribonucleotide)n-3'-hydroxyl + 5'-phospho-(deoxyribonucleotide)m = (deoxyribonucleotide)n+m + AMP + beta-nicotinamide D-nucleotide.. In terms of biological role, DNA ligase that catalyzes the formation of phosphodiester linkages between 5'-phosphoryl and 3'-hydroxyl groups in double-stranded DNA using NAD as a coenzyme and as the energy source for the reaction. It is essential for DNA replication and repair of damaged DNA. The polypeptide is DNA ligase (Gluconobacter oxydans (strain 621H) (Gluconobacter suboxydans)).